A 220-amino-acid chain; its full sequence is 14-3-3-like protein (220 aa).

This sequence belongs to the 14-3-3 family.

This Spinacia oleracea (Spinach) protein is 14-3-3-like protein.